Here is a 121-residue protein sequence, read N- to C-terminus: ATP synthase epsilon chain (121 aa).

The protein belongs to the ATPase epsilon chain family. In terms of assembly, F-type ATPases have 2 components, CF(1) - the catalytic core - and CF(0) - the membrane proton channel. CF(1) has five subunits: alpha(3), beta(3), gamma(1), delta(1), epsilon(1). CF(0) has three main subunits: a, b and c.

The protein localises to the cell membrane. Produces ATP from ADP in the presence of a proton gradient across the membrane. This is ATP synthase epsilon chain from Mycobacterium avium (strain 104).